Consider the following 685-residue polypeptide: DNA ligase (685 aa).

NAD(+) contacts are provided by residues 34-38 (DAVFD), 83-84 (SL), and E113. K115 (N6-AMP-lysine intermediate) is an active-site residue. Positions 136, 173, 297, and 321 each coordinate NAD(+). Zn(2+) is bound by residues C415, C418, C433, and C438. The BRCT domain maps to 607–685 (QEKLQFSGKT…EQELMTLISN (79 aa)).

It belongs to the NAD-dependent DNA ligase family. LigA subfamily. Mg(2+) serves as cofactor. It depends on Mn(2+) as a cofactor.

The catalysed reaction is NAD(+) + (deoxyribonucleotide)n-3'-hydroxyl + 5'-phospho-(deoxyribonucleotide)m = (deoxyribonucleotide)n+m + AMP + beta-nicotinamide D-nucleotide.. Functionally, DNA ligase that catalyzes the formation of phosphodiester linkages between 5'-phosphoryl and 3'-hydroxyl groups in double-stranded DNA using NAD as a coenzyme and as the energy source for the reaction. It is essential for DNA replication and repair of damaged DNA. This chain is DNA ligase, found in Prochlorococcus marinus (strain SARG / CCMP1375 / SS120).